Consider the following 214-residue polypeptide: tRNA (guanine-N(7)-)-methyltransferase (214 aa).

The S-adenosyl-L-methionine site is built by Glu44, Glu69, Asp96, and Asp118. Asp118 is an active-site residue. Residues Lys122, Asp154, and Thr191–Glu194 each bind substrate.

It belongs to the class I-like SAM-binding methyltransferase superfamily. TrmB family.

The enzyme catalyses guanosine(46) in tRNA + S-adenosyl-L-methionine = N(7)-methylguanosine(46) in tRNA + S-adenosyl-L-homocysteine. It functions in the pathway tRNA modification; N(7)-methylguanine-tRNA biosynthesis. In terms of biological role, catalyzes the formation of N(7)-methylguanine at position 46 (m7G46) in tRNA. The protein is tRNA (guanine-N(7)-)-methyltransferase of Listeria monocytogenes serotype 4a (strain HCC23).